Here is a 266-residue protein sequence, read N- to C-terminus: Metallo-beta-lactamase domain-containing protein 1 (266 aa).

Residues 48–71 are disordered; that stretch reads LPQTRGPASSHRESPRGSGGAEAA. His114, His116, Asp118, His119, His169, Asp192, and His231 together coordinate Zn(2+). A disordered region spans residues 229–266; it reads PGHGPPFRVLREASQPETEGGGNSQQEPVVGDEEPALH.

It belongs to the metallo-beta-lactamase superfamily. Glyoxalase II family. As to quaternary structure, homodimer. Requires Zn(2+) as cofactor.

The protein resides in the cytoplasm. It is found in the cytosol. Its subcellular location is the nucleus. It carries out the reaction a ribonucleotidyl-ribonucleotide-RNA + H2O = a 3'-end ribonucleotide-RNA + a 5'-end 5'-phospho-ribonucleoside-RNA + H(+). In terms of biological role, endoribonuclease that catalyzes the hydrolysis of histone-coding pre-mRNA 3'-end. Involved in histone pre-mRNA processing during the S-phase of the cell cycle, which is required for entering/progressing through S-phase. Cleaves histone pre-mRNA at a major and a minor cleavage site after the 5'-ACCCA-3' and the 5'-ACCCACA-3' sequence, respectively, and located downstream of the stem-loop. May require the presence of the HDE element located at the histone pre-RNA 3'-end to avoid non-specific cleavage. This Homo sapiens (Human) protein is Metallo-beta-lactamase domain-containing protein 1.